Reading from the N-terminus, the 834-residue chain is Probable basic-leucine zipper transcription factor D (834 aa).

Residues 83-160 (NNNNMLNDHS…SNNNSSSEGE (78 aa)) are disordered. Residues 90 to 111 (DHSSSPMRVPNSSPSLYNNSIE) are compositionally biased toward polar residues. A compositionally biased stretch (low complexity) spans 119 to 157 (DNSNNNNNNNNNINVNDINVNDINSNSTNNNESNNNSSS). Residues 211–246 (SEQQQQQQQQQQQQQQQQQQQQQQQQQHQHLLQEHQ) are a coiled coil. Residues 378-405 (VVDPPTHNQEDERNVKKQRRLIKNRESA) form a disordered region. One can recognise a bZIP domain in the interval 391–454 (NVKKQRRLIK…KQLAAQNSNS (64 aa)). Positions 393 to 402 (KKQRRLIKNR) are basic motif. A leucine-zipper region spans residues 407-414 (LSRMRKKI). Disordered stretches follow at residues 455–504 (NNNS…QQQS) and 550–712 (LSMS…KTPQ). Positions 550-595 (LSMSDSESSPQKSLRLSSNHHSLPDGTFNTIPIDQQTTATTNTKSL) are enriched in polar residues. Low complexity-rich tracts occupy residues 616–651 (NNNN…NNNN) and 694–707 (TTTT…TTST).

Belongs to the bZIP family.

Its subcellular location is the nucleus. Probable transcriptional regulator. The polypeptide is Probable basic-leucine zipper transcription factor D (bzpD) (Dictyostelium discoideum (Social amoeba)).